Consider the following 279-residue polypeptide: Diaminopimelate epimerase (279 aa).

Residues asparagine 13, glutamine 46, and asparagine 66 each contribute to the substrate site. Cysteine 75 (proton donor) is an active-site residue. Residues 76–77 (GN), asparagine 161, asparagine 194, and 212–213 (ER) contribute to the substrate site. Cysteine 221 functions as the Proton acceptor in the catalytic mechanism. Position 222-223 (222-223 (GT)) interacts with substrate.

Belongs to the diaminopimelate epimerase family. Homodimer.

It localises to the cytoplasm. It catalyses the reaction (2S,6S)-2,6-diaminopimelate = meso-2,6-diaminopimelate. It participates in amino-acid biosynthesis; L-lysine biosynthesis via DAP pathway; DL-2,6-diaminopimelate from LL-2,6-diaminopimelate: step 1/1. In terms of biological role, catalyzes the stereoinversion of LL-2,6-diaminopimelate (L,L-DAP) to meso-diaminopimelate (meso-DAP), a precursor of L-lysine and an essential component of the bacterial peptidoglycan. In Alkalilimnicola ehrlichii (strain ATCC BAA-1101 / DSM 17681 / MLHE-1), this protein is Diaminopimelate epimerase.